A 238-amino-acid polypeptide reads, in one-letter code: Ribonuclease PH (238 aa).

Phosphate-binding positions include R86 and 124–126; that span reads GTR.

It belongs to the RNase PH family. In terms of assembly, homohexameric ring arranged as a trimer of dimers.

It catalyses the reaction tRNA(n+1) + phosphate = tRNA(n) + a ribonucleoside 5'-diphosphate. Phosphorolytic 3'-5' exoribonuclease that plays an important role in tRNA 3'-end maturation. Removes nucleotide residues following the 3'-CCA terminus of tRNAs; can also add nucleotides to the ends of RNA molecules by using nucleoside diphosphates as substrates, but this may not be physiologically important. Probably plays a role in initiation of 16S rRNA degradation (leading to ribosome degradation) during starvation. The protein is Ribonuclease PH of Enterobacter sp. (strain 638).